The following is a 476-amino-acid chain: UDP-N-acetylmuramate--L-alanine ligase (476 aa).

Residue 126 to 132 (GAHGKTT) coordinates ATP.

The protein belongs to the MurCDEF family.

The protein localises to the cytoplasm. The catalysed reaction is UDP-N-acetyl-alpha-D-muramate + L-alanine + ATP = UDP-N-acetyl-alpha-D-muramoyl-L-alanine + ADP + phosphate + H(+). It functions in the pathway cell wall biogenesis; peptidoglycan biosynthesis. Functionally, cell wall formation. This is UDP-N-acetylmuramate--L-alanine ligase from Psychrobacter sp. (strain PRwf-1).